A 1293-amino-acid polypeptide reads, in one-letter code: Late blight resistance protein R1-A (1293 aa).

Coiled coils occupy residues 423-446 (RYSD…ESLQ) and 538-560 (PRMN…KLLN). An NB-ARC domain is found at 539–826 (RMNEEIVGFE…SEAFIKSSEG (288 aa)). An ATP-binding site is contributed by 572 to 579 (GMPGLGKT). LRR repeat units follow at residues 876-899 (AEEN…VYSH), 956-981 (FKFL…VYLK), 1027-1049 (MVKL…LLEN), 1056-1079 (LETL…KTPN), 1102-1125 (PIRL…ISAP), 1149-1172 (LKHL…KVSN), 1175-1197 (FPQL…ADDA), 1198-1222 (FPNL…FMDI), and 1235-1259 (ESVV…NFKL).

This sequence belongs to the disease resistance NB-LRR family.

It localises to the cytoplasm. The protein localises to the membrane. In terms of biological role, confers resistance to late blight (Phytophthora infestans) races carrying the avirulence gene Avr1. Resistance proteins guard the plant against pathogens that contain an appropriate avirulence protein via an indirect interaction with this avirulence protein. That triggers a defense system including the hypersensitive response, which restricts the pathogen growth. In Solanum demissum (Wild potato), this protein is Late blight resistance protein R1-A (R1A).